The chain runs to 588 residues: Juvenile hormone esterase (588 aa).

The first 23 residues, 1 to 23 (MKFPKNLFLVLFYTSWKFCDVCA), serve as a signal peptide directing secretion. N-linked (GlcNAc...) asparagine glycans are attached at residues Asn79 and Asn83. Cysteines 91 and 109 form a disulfide. Ser214 serves as the catalytic Acyl-ester intermediate. N-linked (GlcNAc...) asparagine glycosylation is present at Asn257. Cysteines 268 and 281 form a disulfide. The active-site Charge relay system is the Glu350. N-linked (GlcNAc...) asparagine glycosylation is found at Asn389, Asn396, and Asn472. His479 functions as the Charge relay system in the catalytic mechanism.

It belongs to the type-B carboxylesterase/lipase family.

It localises to the secreted. The catalysed reaction is juvenile hormone III + H2O = juvenile hormone III carboxylate + methanol + H(+). Its activity is regulated as follows. Inhibited by 3-octylthio-1,1,1-trifluoro-2-propanone (OTFP), a specific inhibitor of juvenile hormone esterase (JHE), but not by diisopropyl fluorophosphate (DFP), a serine enzyme inhibitor. Its function is as follows. May function as a juvenile hormone (JH)-specific degradation enzyme in vivo decreasing JH activity. Hydrolyzes JH III in vitro. Hydrolyzes effectively also methyl hepthylthioacetothioate (HEPTAT), a synthetic substrate. Of the general esterase substrates, it has preference for 2-naphthyl acetate (2-NA) and shows a weak activity for 1-NA and 4-nitrophenylacetate (4-NPA). The chain is Juvenile hormone esterase from Tribolium castaneum (Red flour beetle).